The chain runs to 805 residues: Centrosomal protein of 85 kDa-like (805 aa).

Disordered stretches follow at residues 1 to 27 (MWGR…AGPD) and 50 to 89 (RNNH…LSFK). Serine 15 carries the phosphoserine modification. Residues 60–74 (ASDSGDTGIGTSCSD) show a composition bias toward polar residues. Residue serine 207 is modified to Phosphoserine. Residues 439–682 (SQQGEFEQKL…LENQRQTDET (244 aa)) are a coiled coil.

Belongs to the CEP85 family. As to expression, isoform 1 and isoform 4 are expressed in spleen, lymph, thymus, tonsil and peripheral blood leukocytes, with isoform 1 expressed at higher levels. Isoform 4 is detected in K-562 leukemia cells and in the blood of precursor T lymphoblastic lymphoma (T-ALL) patients.

The protein localises to the cytoplasm. The protein resides in the cytoskeleton. It localises to the microtubule organizing center. Its subcellular location is the centrosome. Its function is as follows. Plays an essential role in neuronal cell migration. The polypeptide is Centrosomal protein of 85 kDa-like (Homo sapiens (Human)).